Reading from the N-terminus, the 288-residue chain is Protoheme IX farnesyltransferase 2 (288 aa).

The next 8 helical transmembrane spans lie at 16 to 36, 38 to 58, 88 to 108, 111 to 131, 139 to 159, 166 to 186, 227 to 247, and 266 to 286; these read IGVFCALAAIAGALATPGAVP, FAPVMAVALAVLLSAAAAGAF, LWPLGLLALTVAAVALAAFAA, WAALHVFLGAFVYGIVYTVWL, IVIGGLSGSFAVLAGAAVAVP, LILALVLFLWTPPHFWSLATA, AFFGAGPLYLGAAILGGGWFL, and FFASLIQLVLLLTAVMVEPLL.

It belongs to the UbiA prenyltransferase family. Protoheme IX farnesyltransferase subfamily.

The protein resides in the cell inner membrane. The enzyme catalyses heme b + (2E,6E)-farnesyl diphosphate + H2O = Fe(II)-heme o + diphosphate. The protein operates within porphyrin-containing compound metabolism; heme O biosynthesis; heme O from protoheme: step 1/1. Converts heme B (protoheme IX) to heme O by substitution of the vinyl group on carbon 2 of heme B porphyrin ring with a hydroxyethyl farnesyl side group. This is Protoheme IX farnesyltransferase 2 from Paramagnetospirillum magneticum (strain ATCC 700264 / AMB-1) (Magnetospirillum magneticum).